The primary structure comprises 229 residues: Cytidylate kinase (229 aa).

ATP is bound at residue 12–20 (GPSGAGKGT).

This sequence belongs to the cytidylate kinase family. Type 1 subfamily.

It is found in the cytoplasm. It carries out the reaction CMP + ATP = CDP + ADP. The enzyme catalyses dCMP + ATP = dCDP + ADP. The polypeptide is Cytidylate kinase (Pseudomonas paraeruginosa (strain DSM 24068 / PA7) (Pseudomonas aeruginosa (strain PA7))).